The following is a 323-amino-acid chain: Prostaglandin-E(2) 9-reductase (323 aa).

NADP(+) is bound by residues 23 to 24 and Asp50; that span reads TY. Tyr24 contributes to the substrate binding site. Residue Tyr55 is the Proton donor of the active site. His117 is a binding site for substrate. Residues 166–167, Gln190, 216–221, and 270–280 each bind NADP(+); these read SN, YSALGS, and KSFTEKRIKEN.

This sequence belongs to the aldo/keto reductase family.

It localises to the cytoplasm. It catalyses the reaction prostaglandin F2alpha + NADP(+) = prostaglandin E2 + NADPH + H(+). The enzyme catalyses (17R,20S)-17,20-dihydroxypregn-4-en-3-one + NADP(+) = 17alpha-hydroxyprogesterone + NADPH + H(+). The catalysed reaction is (17R,20S)-17,20-dihydroxypregn-4-en-3-one + NAD(+) = 17alpha-hydroxyprogesterone + NADH + H(+). Can convert prostaglandin E2 to prostaglandin F2-alpha. The chain is Prostaglandin-E(2) 9-reductase (AKR1C5) from Oryctolagus cuniculus (Rabbit).